The primary structure comprises 557 residues: Jerky protein (557 aa).

Positions 11-62 (KGEKRKRVVLTLKEKIDICTRLERGESRKALMQEYNVGMSTLYDIKAHKAQL) constitute an HTH psq-type domain. DNA-binding regions (H-T-H motif) lie at residues 38–58 (RKAL…IKAH) and 110–142 (PMLI…FKAR). The HTH CENPB-type domain maps to 77-149 (QRRTLHTPKL…KARHGIKKLD (73 aa)). The DDE-1 domain maps to 213–382 (KDRLTVLMCA…VPSQVFQRAW (170 aa)).

It belongs to the tigger transposable element derived protein family. Brain; highest in the temporal and brainstem regions.

It localises to the nucleus. In terms of biological role, may bind DNA. This is Jerky protein from Mus musculus (Mouse).